The following is a 283-amino-acid chain: Formamidopyrimidine-DNA glycosylase (283 aa).

Residue P2 is the Schiff-base intermediate with DNA of the active site. Residue E3 is the Proton donor of the active site. Catalysis depends on K61, which acts as the Proton donor; for beta-elimination activity. DNA-binding residues include H94, R113, and K159. The FPG-type zinc-finger motif lies at 245–279 (DAYGREGESCRRCGAVMRREKFMNRSSFYCPKCQP). Residue R269 is the Proton donor; for delta-elimination activity of the active site.

Belongs to the FPG family. Monomer. Requires Zn(2+) as cofactor.

It carries out the reaction Hydrolysis of DNA containing ring-opened 7-methylguanine residues, releasing 2,6-diamino-4-hydroxy-5-(N-methyl)formamidopyrimidine.. The catalysed reaction is 2'-deoxyribonucleotide-(2'-deoxyribose 5'-phosphate)-2'-deoxyribonucleotide-DNA = a 3'-end 2'-deoxyribonucleotide-(2,3-dehydro-2,3-deoxyribose 5'-phosphate)-DNA + a 5'-end 5'-phospho-2'-deoxyribonucleoside-DNA + H(+). Its function is as follows. Involved in base excision repair of DNA damaged by oxidation or by mutagenic agents. Acts as a DNA glycosylase that recognizes and removes damaged bases. Has a preference for oxidized purines, such as 7,8-dihydro-8-oxoguanine (8-oxoG). Has AP (apurinic/apyrimidinic) lyase activity and introduces nicks in the DNA strand. Cleaves the DNA backbone by beta-delta elimination to generate a single-strand break at the site of the removed base with both 3'- and 5'-phosphates. The sequence is that of Formamidopyrimidine-DNA glycosylase from Mycobacterium avium (strain 104).